The chain runs to 477 residues: UDP-N-acetylmuramate--L-alanine ligase (477 aa).

118–124 is a binding site for ATP; sequence GTHGKTS.

This sequence belongs to the MurCDEF family.

Its subcellular location is the cytoplasm. The enzyme catalyses UDP-N-acetyl-alpha-D-muramate + L-alanine + ATP = UDP-N-acetyl-alpha-D-muramoyl-L-alanine + ADP + phosphate + H(+). It functions in the pathway cell wall biogenesis; peptidoglycan biosynthesis. Cell wall formation. In Corynebacterium diphtheriae (strain ATCC 700971 / NCTC 13129 / Biotype gravis), this protein is UDP-N-acetylmuramate--L-alanine ligase.